Consider the following 460-residue polypeptide: Probable carboxypeptidase ARB_01041 (460 aa).

A signal peptide spans 1–22 (MQKTYIWALVSLLASSLVDARS). Residue Asn-98 is glycosylated (N-linked (GlcNAc...) asparagine). Asp-175 provides a ligand contact to Zn(2+). The Proton acceptor role is filled by Glu-207. Position 208 (Glu-208) interacts with Zn(2+). A glycan (N-linked (GlcNAc...) asparagine) is linked at Asn-395.

Belongs to the peptidase M20A family. Zn(2+) is required as a cofactor.

The protein resides in the secreted. The polypeptide is Probable carboxypeptidase ARB_01041 (Arthroderma benhamiae (strain ATCC MYA-4681 / CBS 112371) (Trichophyton mentagrophytes)).